The chain runs to 252 residues: 2-succinyl-6-hydroxy-2,4-cyclohexadiene-1-carboxylate synthase (252 aa).

Belongs to the AB hydrolase superfamily. MenH family. Monomer.

The catalysed reaction is 5-enolpyruvoyl-6-hydroxy-2-succinyl-cyclohex-3-ene-1-carboxylate = (1R,6R)-6-hydroxy-2-succinyl-cyclohexa-2,4-diene-1-carboxylate + pyruvate. It functions in the pathway quinol/quinone metabolism; 1,4-dihydroxy-2-naphthoate biosynthesis; 1,4-dihydroxy-2-naphthoate from chorismate: step 3/7. It participates in quinol/quinone metabolism; menaquinone biosynthesis. Functionally, catalyzes a proton abstraction reaction that results in 2,5-elimination of pyruvate from 2-succinyl-5-enolpyruvyl-6-hydroxy-3-cyclohexene-1-carboxylate (SEPHCHC) and the formation of 2-succinyl-6-hydroxy-2,4-cyclohexadiene-1-carboxylate (SHCHC). This Escherichia coli (strain SE11) protein is 2-succinyl-6-hydroxy-2,4-cyclohexadiene-1-carboxylate synthase.